The chain runs to 208 residues: Peptidyl-tRNA hydrolase 2 (208 aa).

Low complexity predominate over residues 32–45 (SNASSTKKSSATLL). The tract at residues 32–81 (SNASSTKKSSATLLRSKEMKEGKLHNDTDEEESESEDESDEDEDIESTSL) is disordered. Residues 46–58 (RSKEMKEGKLHND) are compositionally biased toward basic and acidic residues. A compositionally biased stretch (acidic residues) spans 59-77 (TDEEESESEDESDEDEDIE). Lysine 152 is covalently cross-linked (Glycyl lysine isopeptide (Lys-Gly) (interchain with G-Cter in ubiquitin)).

It belongs to the PTH2 family.

It is found in the cytoplasm. The enzyme catalyses an N-acyl-L-alpha-aminoacyl-tRNA + H2O = an N-acyl-L-amino acid + a tRNA + H(+). Functionally, the natural substrate for this enzyme may be peptidyl-tRNAs which drop off the ribosome during protein synthesis. This is Peptidyl-tRNA hydrolase 2 from Saccharomyces cerevisiae (strain ATCC 204508 / S288c) (Baker's yeast).